The sequence spans 1189 residues: Pesticidal crystal protein Cry1Ca (1189 aa).

This sequence belongs to the delta endotoxin family.

Functionally, promotes colloidosmotic lysis by binding to the midgut epithelial cells of many lepidopteran larvae including Spodoptera species. The polypeptide is Pesticidal crystal protein Cry1Ca (cry1Ca) (Bacillus thuringiensis subsp. entomocidus).